Here is a 132-residue protein sequence, read N- to C-terminus: MRHGHGLRKLNRTSSHRLAMLQNMMNSLIEHEVIKTTVPKAKELRRVIEPMITLAKKPTVANKRLAFDRLRDRDSVVKLFGELGPRFAARPGGYTRILKMGFRVGDNAPMALVELVDRPEIKEEAAEQGAAE.

Belongs to the bacterial ribosomal protein bL17 family. In terms of assembly, part of the 50S ribosomal subunit. Contacts protein L32.

In Variovorax paradoxus (strain S110), this protein is Large ribosomal subunit protein bL17.